The following is a 384-amino-acid chain: Histidinol-phosphate aminotransferase (384 aa).

The residue at position 223 (K223) is an N6-(pyridoxal phosphate)lysine.

It belongs to the class-II pyridoxal-phosphate-dependent aminotransferase family. Pyridoxal 5'-phosphate is required as a cofactor.

The enzyme catalyses L-histidinol phosphate + 2-oxoglutarate = 3-(imidazol-4-yl)-2-oxopropyl phosphate + L-glutamate. Its pathway is amino-acid biosynthesis; L-histidine biosynthesis; L-histidine from 5-phospho-alpha-D-ribose 1-diphosphate: step 7/9. This Schizosaccharomyces pombe (strain 972 / ATCC 24843) (Fission yeast) protein is Histidinol-phosphate aminotransferase (his3).